A 414-amino-acid chain; its full sequence is tRNA N6-adenosine threonylcarbamoyltransferase, mitochondrial (414 aa).

The N-terminal 29 residues, 1–29 (MLMLRRTAGAIPKPPKSKVYGFLRRFSVH), are a transit peptide targeting the mitochondrion. N6-acetyllysine occurs at positions 74 and 140. Positions 147 and 151 each coordinate a divalent metal cation. Substrate is bound by residues 169 to 173 (LISGG) and D202. The residue at position 203 (K203) is an N6-acetyllysine. The substrate site is built by G222 and E226. N6-acetyllysine is present on residues K230 and K299. Substrate contacts are provided by residues 329–330 (SN) and T357. Residue D358 participates in a divalent metal cation binding.

Belongs to the KAE1 / TsaD family. As to quaternary structure, monomer. It depends on a divalent metal cation as a cofactor.

Its subcellular location is the mitochondrion. The enzyme catalyses L-threonylcarbamoyladenylate + adenosine(37) in tRNA = N(6)-L-threonylcarbamoyladenosine(37) in tRNA + AMP + H(+). Functionally, required for the formation of a threonylcarbamoyl group on adenosine at position 37 (t(6)A37) in mitochondrial tRNAs that read codons beginning with adenine. Probably involved in the transfer of the threonylcarbamoyl moiety of threonylcarbamoyl-AMP (TC-AMP) to the N6 group of A37. Involved in mitochondrial genome maintenance. The protein is tRNA N6-adenosine threonylcarbamoyltransferase, mitochondrial of Mus musculus (Mouse).